Here is a 367-residue protein sequence, read N- to C-terminus: Peroxidase 1 (367 aa).

An N-terminal signal peptide occupies residues 1–33 (MAKESKLTAGVAAALTVVAACALCLLLPATARA). Position 34 is a pyrrolidone carboxylic acid (Gln-34). Disulfide bonds link Cys-44–Cys-125, Cys-77–Cys-82, Cys-131–Cys-335, and Cys-209–Cys-244. His-75 (proton acceptor) is an active-site residue. The Ca(2+) site is built by Asp-76, Val-79, Gly-81, Asp-83, and Ser-85. Residue Asn-164 is glycosylated (N-linked (GlcNAc...) asparagine). A substrate-binding site is contributed by Pro-172. Heme b is bound at residue His-202. Thr-203 serves as a coordination point for Ca(2+). 2 N-linked (GlcNAc...) asparagine glycosylation sites follow: Asn-218 and Asn-247. Ca(2+)-binding residues include Asp-259, Thr-262, and Asp-267. The N-linked (GlcNAc...) asparagine glycan is linked to Asn-303.

It belongs to the peroxidase family. Classical plant (class III) peroxidase subfamily. Requires heme b as cofactor. It depends on Ca(2+) as a cofactor. Expressed in the root tip meristems.

Its subcellular location is the secreted. The protein localises to the vacuole. The catalysed reaction is 2 a phenolic donor + H2O2 = 2 a phenolic radical donor + 2 H2O. Its function is as follows. Removal of H(2)O(2), oxidation of toxic reductants, biosynthesis and degradation of lignin, suberization, auxin catabolism, response to environmental stresses such as wounding, pathogen attack and oxidative stress. These functions might be dependent on each isozyme/isoform in each plant tissue. This chain is Peroxidase 1 (PER1), found in Zea mays (Maize).